We begin with the raw amino-acid sequence, 412 residues long: uncharacterized protein (412 aa).

Residues 6 to 64 enclose the TRAM domain; the sequence is ELAKGDIISVEVLRPAHGGEGIGHHDGRVIFVKGGIPGDVVDVEIAQLKKKWARGEVVK. 4 residues coordinate S-adenosyl-L-methionine: Gln242, Tyr278, Glu300, and Asp341. Cys368 functions as the Nucleophile in the catalytic mechanism.

This sequence belongs to the class I-like SAM-binding methyltransferase superfamily. RNA M5U methyltransferase family.

This is an uncharacterized protein from Corynebacterium glutamicum (strain ATCC 13032 / DSM 20300 / JCM 1318 / BCRC 11384 / CCUG 27702 / LMG 3730 / NBRC 12168 / NCIMB 10025 / NRRL B-2784 / 534).